A 61-amino-acid chain; its full sequence is Small ribosomal subunit protein uS14 (61 aa).

Zn(2+) contacts are provided by C24, C27, C40, and C43.

It belongs to the universal ribosomal protein uS14 family. Zinc-binding uS14 subfamily. In terms of assembly, part of the 30S ribosomal subunit. Contacts proteins S3 and S10. It depends on Zn(2+) as a cofactor.

In terms of biological role, binds 16S rRNA, required for the assembly of 30S particles and may also be responsible for determining the conformation of the 16S rRNA at the A site. This chain is Small ribosomal subunit protein uS14, found in Alkaliphilus metalliredigens (strain QYMF).